Consider the following 225-residue polypeptide: UPF0758 protein XC_3944 (225 aa).

Residues 102–224 (ALSDPSSVGR…PVSLAERGWV (123 aa)) form the MPN domain. The Zn(2+) site is built by His-173, His-175, and Asp-186. Residues 173–186 (HNHPSGNPEPSEAD) carry the JAMM motif motif.

Belongs to the UPF0758 family.

The sequence is that of UPF0758 protein XC_3944 from Xanthomonas campestris pv. campestris (strain 8004).